Consider the following 217-residue polypeptide: Phosphatase MT3486 (217 aa).

The active-site Nucleophile is aspartate 9.

This sequence belongs to the HAD-like hydrolase superfamily.

In terms of biological role, able to hydrolyze geranyl diphosphate (GPP), farnesyl diphosphate (FPP) and geranylgeranyl diphosphate (GGPP) to respectively yield geraniol, farnesol and geranylgeraniol. The protein is Phosphatase MT3486 of Mycobacterium tuberculosis (strain CDC 1551 / Oshkosh).